Here is a 203-residue protein sequence, read N- to C-terminus: Cryptic neisserial protein 1 (203 aa).

The first 18 residues, 1 to 18 (MRRAILLILTLTVGTSLA), serve as a signal peptide directing secretion.

It belongs to the Cnp family.

The protein resides in the periplasm. It is found in the cytoplasm. In Neisseria gonorrhoeae (strain ATCC 700825 / FA 1090), this protein is Cryptic neisserial protein 1.